A 547-amino-acid chain; its full sequence is Chaperonin GroEL (547 aa).

Residues 30-33, Lys-51, 87-91, Gly-415, 479-481, and Asp-495 each bind ATP; these read TLGP, DGTTT, and NAA. Residues 525–547 form a disordered region; that stretch reads PKEDKPDLGGGNPGGAGGMGGMM. Residues 532-547 show a composition bias toward gly residues; sequence LGGGNPGGAGGMGGMM.

It belongs to the chaperonin (HSP60) family. As to quaternary structure, forms a cylinder of 14 subunits composed of two heptameric rings stacked back-to-back. Interacts with the co-chaperonin GroES.

It localises to the cytoplasm. The enzyme catalyses ATP + H2O + a folded polypeptide = ADP + phosphate + an unfolded polypeptide.. Its function is as follows. Together with its co-chaperonin GroES, plays an essential role in assisting protein folding. The GroEL-GroES system forms a nano-cage that allows encapsulation of the non-native substrate proteins and provides a physical environment optimized to promote and accelerate protein folding. The polypeptide is Chaperonin GroEL (Blochmanniella floridana).